The following is a 204-amino-acid chain: uncharacterized protein (204 aa).

The first 16 residues, 1 to 16 (MKYTFLAVLSAVTVLA), serve as a signal peptide directing secretion.

It localises to the secreted. This is an uncharacterized protein from Arthroderma benhamiae (strain ATCC MYA-4681 / CBS 112371) (Trichophyton mentagrophytes).